The following is a 540-amino-acid chain: Chaperonin GroEL 4 (540 aa).

ATP is bound by residues 29–32 (TLGP), 86–90 (DGTTT), Gly413, 477–479 (NAA), and Asp493.

This sequence belongs to the chaperonin (HSP60) family. In terms of assembly, forms a cylinder of 14 subunits composed of two heptameric rings stacked back-to-back. Interacts with the co-chaperonin GroES.

The protein localises to the cytoplasm. It carries out the reaction ATP + H2O + a folded polypeptide = ADP + phosphate + an unfolded polypeptide.. Functionally, together with its co-chaperonin GroES, plays an essential role in assisting protein folding. The GroEL-GroES system forms a nano-cage that allows encapsulation of the non-native substrate proteins and provides a physical environment optimized to promote and accelerate protein folding. The chain is Chaperonin GroEL 4 from Frankia alni (strain DSM 45986 / CECT 9034 / ACN14a).